The sequence spans 309 residues: HTH-type transcriptional activator AaeR (309 aa).

An HTH lysR-type domain is found at 1-59; sequence MERLKRMSVFAKVVEFGSFTAAARQLQMSVSSISQTVSKLEDELQVKLLNRSTRSIGLT. The segment at residues 19 to 38 is a DNA-binding region (H-T-H motif); that stretch reads FTAAARQLQMSVSSISQTVS.

It belongs to the LysR transcriptional regulatory family.

Its activity is regulated as follows. Activity is regulated by p-hydroxybenzoic acid. In terms of biological role, transcriptional regulator that activates expression of the aaeXAB operon, which is involved in the efflux of aromatic carboxylic acids such as p-hydroxybenzoic acid (pHBA). In the presence of the effector pHBA, acts by binding to a single target within the aaeXAB-aaeR intergenic region. In the absence of pHBA, binds more than 50 sites along the E.coli K12 genome, including genes related to biofilm formation and several genes involved in stress response, suggesting that it might play a role in quorum sensing in the absence of pHBA. In Escherichia coli (strain K12), this protein is HTH-type transcriptional activator AaeR.